A 226-amino-acid chain; its full sequence is Phospholipase Culp4 (226 aa).

A signal peptide spans 1 to 45 (MIPRPQPHSGRWRAGAARRLTSLVAAAFAAATLLLTPALAPPASA). An intrachain disulfide couples cysteine 47 to cysteine 117. Serine 128 (nucleophile) is an active-site residue. Residues cysteine 191 and cysteine 198 are joined by a disulfide bond. Residue aspartate 195 is part of the active site. The active-site Proton donor/acceptor is histidine 207.

It belongs to the cutinase family. Homodimer.

The protein localises to the cell membrane. It is found in the secreted. The protein resides in the cell wall. It carries out the reaction 1,2-dihexadecanoyl-sn-glycero-3-phosphocholine + H2O = 1-hexadecanoyl-sn-glycero-3-phosphocholine + hexadecanoate + H(+). It catalyses the reaction a butanoate ester + H2O = an aliphatic alcohol + butanoate + H(+). With respect to regulation, inhibited by high concentrations of paraoxon. Inhibited by tetrahydrolipstatin (THL), a specific lipase inhibitor. Its function is as follows. A2-type phospholipase, which is probably involved in the degradation of macrophage membrane. Hydrolyzes dipalmitoylphosphatidylcholine. Also shows moderate esterase activity and hydrolyzes the p-nitrophenol-linked aliphatic ester pNP-butyrate (C4). Does not exhibit cutinase activity. This Mycobacterium tuberculosis (strain ATCC 25618 / H37Rv) protein is Phospholipase Culp4.